A 185-amino-acid chain; its full sequence is dCTP deaminase (185 aa).

107–112 (KSTYAR) lines the dCTP pocket. The active-site Proton donor/acceptor is the E133. 3 residues coordinate dCTP: Q152, Y166, and Q176.

The protein belongs to the dCTP deaminase family. In terms of assembly, homotrimer.

It catalyses the reaction dCTP + H2O + H(+) = dUTP + NH4(+). Its pathway is pyrimidine metabolism; dUMP biosynthesis; dUMP from dCTP (dUTP route): step 1/2. Its function is as follows. Catalyzes the deamination of dCTP to dUTP. The polypeptide is dCTP deaminase (Nitratiruptor sp. (strain SB155-2)).